The sequence spans 430 residues: MAVLARQLQRLLWTACKKKEREKEGREEEEEEEAGRRAPEGPRSLLTAPRRAQRPHGGAEASGGLRFGASAAQGWRARMEDAHCTWLSLPGLPPGWALFAVLDGHGGARAARFGARHLPGHVLQELGPEPSEPEGVREALRRAFLSADERLRSLWPRVETGGCTAVVLLVSPRFLYLAHCGDSRAVLSRAGAVAFSTEDHRPLRPRERERIHAAGGTIRRRRVEGSLAVSRALGDFTYKEAPGRPPELQLVSAEPEVAALARQAEDEFMLLASDGVWDTVSGAALAGLVASRLRLGLAPELLCAQLLDTCLCKGSLDNMTCILVCFPGAPRPSEEAIRRELALDAALGCRIAELCASAQKPPSLNTVFRTLASEDIPDLPPGGGLDCKATVIAEVYSQICQVSEECGEKGQDGAGKSNPTHLGSALDMEA.

The interval C16–L65 is disordered. Basic and acidic residues predominate over residues K17–R26. The PPM-type phosphatase domain occupies R66–F326. The Mn(2+) site is built by D103, G104, D274, and D317. Positions G407–A430 are disordered.

It belongs to the PP2C family. Mg(2+) is required as a cofactor. The cofactor is Mn(2+).

It carries out the reaction O-phospho-L-seryl-[protein] + H2O = L-seryl-[protein] + phosphate. The catalysed reaction is O-phospho-L-threonyl-[protein] + H2O = L-threonyl-[protein] + phosphate. The sequence is that of Probable protein phosphatase 1N (PPM1N) from Homo sapiens (Human).